Consider the following 216-residue polypeptide: MAPPIEVSTKSYVEKHVSLPTLNERILSSMSHRSVAAHPWHDLEIGPEAPIIFNCVVEIGKGSKVKYELDKTTGLIKVDRILYSSVVYPHNYGFIPRTLCEDSDPIDVLVIMQEPVIPGCFLRAKAIGLMPMIDQGEKDDKIIAVCADDPEYRHYNDISELPPHRMAEIRRFFEDYKKNENKEVAVNDFLPATAAYDAVQHSMDLYADYVVENLRR.

The residue at position 18 (serine 18) is a Phosphoserine. Substrate contacts are provided by lysine 66 and arginine 80. Tyrosine 88 serves as the catalytic Proton donor. Residue tyrosine 92 participates in substrate binding. Mg(2+) is bound by residues aspartate 102, aspartate 107, and aspartate 139. Residue tyrosine 176 coordinates substrate.

This sequence belongs to the PPase family. In terms of assembly, monomer. Requires Mg(2+) as cofactor. Ubiquitous, excepted in pollen. Very low expression in cork, xylem and hypocotyls.

The protein resides in the cytoplasm. The catalysed reaction is diphosphate + H2O = 2 phosphate + H(+). Inhibited by Zn(2+), Ca(2+), Ba(2+), Fe(2+), Co(2+), Cu(2+), Eu(2+), Eu(3+) and Mn(2+). Its function is as follows. Catalyzes the irreversible hydrolysis of pyrophosphate (PPi) to phosphate. The MgPPi(2-) complex binds to the enzyme only after a free Mg(2+) ion has bound. No activity with glycerol-3-phosphate, glucose-6-phosphate, p-nitrophenylphosphate, ADP, NADP(+), NAD(+),NADH, NADPH or phosphoribosyl pyrophosphate as substrates. In Arabidopsis thaliana (Mouse-ear cress), this protein is Soluble inorganic pyrophosphatase 4.